A 213-amino-acid chain; its full sequence is 3-isopropylmalate dehydratase small subunit (213 aa).

The protein belongs to the LeuD family. LeuD type 1 subfamily. In terms of assembly, heterodimer of LeuC and LeuD.

The catalysed reaction is (2R,3S)-3-isopropylmalate = (2S)-2-isopropylmalate. The protein operates within amino-acid biosynthesis; L-leucine biosynthesis; L-leucine from 3-methyl-2-oxobutanoate: step 2/4. Catalyzes the isomerization between 2-isopropylmalate and 3-isopropylmalate, via the formation of 2-isopropylmaleate. The chain is 3-isopropylmalate dehydratase small subunit from Pseudomonas syringae pv. syringae (strain B728a).